The sequence spans 472 residues: ATP synthase subunit beta (472 aa).

Position 157–164 (157–164) interacts with ATP; that stretch reads GGAGVGKT.

The protein belongs to the ATPase alpha/beta chains family. F-type ATPases have 2 components, CF(1) - the catalytic core - and CF(0) - the membrane proton channel. CF(1) has five subunits: alpha(3), beta(3), gamma(1), delta(1), epsilon(1). CF(0) has three main subunits: a(1), b(2) and c(9-12). The alpha and beta chains form an alternating ring which encloses part of the gamma chain. CF(1) is attached to CF(0) by a central stalk formed by the gamma and epsilon chains, while a peripheral stalk is formed by the delta and b chains.

It is found in the cell membrane. It carries out the reaction ATP + H2O + 4 H(+)(in) = ADP + phosphate + 5 H(+)(out). Produces ATP from ADP in the presence of a proton gradient across the membrane. The catalytic sites are hosted primarily by the beta subunits. The polypeptide is ATP synthase subunit beta (Desulforamulus reducens (strain ATCC BAA-1160 / DSM 100696 / MI-1) (Desulfotomaculum reducens)).